Reading from the N-terminus, the 339-residue chain is Phosphate acyltransferase (339 aa).

It belongs to the PlsX family. In terms of assembly, homodimer. Probably interacts with PlsY.

The protein localises to the cytoplasm. It carries out the reaction a fatty acyl-[ACP] + phosphate = an acyl phosphate + holo-[ACP]. Its pathway is lipid metabolism; phospholipid metabolism. Its function is as follows. Catalyzes the reversible formation of acyl-phosphate (acyl-PO(4)) from acyl-[acyl-carrier-protein] (acyl-ACP). This enzyme utilizes acyl-ACP as fatty acyl donor, but not acyl-CoA. In Pasteurella multocida (strain Pm70), this protein is Phosphate acyltransferase.